The sequence spans 215 residues: Adenylate kinase (215 aa).

Position 10 to 15 (10 to 15 (GAGKGT)) interacts with ATP. Residues 30–59 (STGDILRANVRDGTKLGKEAKGYMDKGELV) form an NMP region. AMP is bound by residues T31, R36, 57-59 (ELV), 85-88 (GYPR), and Q92. Positions 126 to 162 (GRYVCTCGESYHMKFNPPKKENVCDACGADLYQRDDD) are LID. R127 is an ATP binding site. Zn(2+) is bound by residues C130 and C132. 135 to 136 (SY) contacts ATP. Zn(2+) contacts are provided by C149 and C152. Residues R159 and R170 each contribute to the AMP site. Position 198 (G198) interacts with ATP.

The protein belongs to the adenylate kinase family. As to quaternary structure, monomer.

It is found in the cytoplasm. The catalysed reaction is AMP + ATP = 2 ADP. The protein operates within purine metabolism; AMP biosynthesis via salvage pathway; AMP from ADP: step 1/1. Its function is as follows. Catalyzes the reversible transfer of the terminal phosphate group between ATP and AMP. Plays an important role in cellular energy homeostasis and in adenine nucleotide metabolism. This is Adenylate kinase from Methanococcoides burtonii (strain DSM 6242 / NBRC 107633 / OCM 468 / ACE-M).